The chain runs to 144 residues: Maximins 3/H14 (144 aa).

The first 18 residues, 1–18, serve as a signal peptide directing secretion; it reads MNFKYIVAVSFLIASAYA. Propeptides lie at residues 19 to 43 and 73 to 122; these read RSVQ…REIR and RTAE…KKEK. Residue Ile-143 is modified to Isoleucine amide.

It belongs to the bombinin family. As to expression, expressed by the skin glands.

It localises to the secreted. Functionally, maximin-3 shows antibacterial activity against both Gram-positive and Gram-negative bacteria. It also shows antimicrobial activity against the fungus C.albicans, but not against A.flavus nor P.uticale. It has little hemolytic activity. It possess a significant cytotoxicity against tumor cell lines. It possess a significant anti-HIV activity. It shows high spermicidal activity. In terms of biological role, maximin-H14 shows antimicrobial activity against bacteria and against the fungus C.albicans. Shows strong hemolytic activity. The polypeptide is Maximins 3/H14 (Bombina maxima (Giant fire-bellied toad)).